The chain runs to 393 residues: Methylthioribose kinase (393 aa).

Residues asparagine 38, lysine 53, and 107-109 (EDL) each bind ATP. A substrate-binding site is contributed by aspartate 225. 242 to 244 (DPE) lines the ATP pocket. Arginine 332 serves as a coordination point for substrate.

Belongs to the methylthioribose kinase family. As to quaternary structure, homodimer.

It carries out the reaction 5-(methylsulfanyl)-D-ribose + ATP = 5-(methylsulfanyl)-alpha-D-ribose 1-phosphate + ADP + H(+). It functions in the pathway amino-acid biosynthesis; L-methionine biosynthesis via salvage pathway; S-methyl-5-thio-alpha-D-ribose 1-phosphate from S-methyl-5'-thioadenosine (hydrolase route): step 2/2. Functionally, catalyzes the phosphorylation of methylthioribose into methylthioribose-1-phosphate. The protein is Methylthioribose kinase of Bacillus cereus (strain ATCC 14579 / DSM 31 / CCUG 7414 / JCM 2152 / NBRC 15305 / NCIMB 9373 / NCTC 2599 / NRRL B-3711).